A 503-amino-acid chain; its full sequence is MHTHNNFKTPSDADELDDLDDDMVIGVIEEIAQEALVGEDESDSDIDEHDLADMEAPEPNQNADENESISSDSSFDPNAEDSSDSDDSMLEEDEAEGASSGEATSAKRRKDDNDGPCGSAGDSAAFDLDDLDDETDETVRAIIAAIKKPRSAPPEIKLEDFITDVCFHPDRDIIALATIIGDVHLYEYGNEGNKLLRTIEVHSKACRDVEFTEDGRYLLTASKDKCVMVTDLETEKLKKLYETAHDDAINKLHVLDENLFATGDDAGTVKLWDLRTKNPIFELKEVEDQITQMITNDQKKLLLATSADGYLTTFNIAARKLYVQSEPYEEELNCMGIYRGSSKLVVGTSKGKLYSYNWGYFGYHCDMYPGIKSPVSLMIPITDRIACVAGEDGNIRACHITPYRNLGVVGQHNMPIESLDINTSGELLASSSHNNDVRFWNVKYFEDFGDIKYNDKHNAYKEKRHNLPSSKCTNASDFFSDLTKEDEDNADNNDAAAGPSNSA.

Residues 1 to 131 (MHTHNNFKTP…DSAAFDLDDL (131 aa)) form a disordered region. 2 stretches are compositionally biased toward acidic residues: residues 12-23 (DADELDDLDDDM) and 37-56 (VGEDESDSDIDEHDLADMEA). The segment covering 59–76 (PNQNADENESISSDSSFD) has biased composition (polar residues). The segment covering 78-96 (NAEDSSDSDDSMLEEDEAE) has biased composition (acidic residues). WD repeat units lie at residues 157 to 196 (KLEDFITDVCFHPDRDIIALATIIGDVHLYEYGNEGNKLL), 201 to 242 (VHSK…KLYE), 244 to 282 (AHDDAINKLHVLDENLFATGDDAGTVKLWDLRTKNPIFE), 285 to 324 (EVEDQITQMITNDQKKLLLATSADGYLTTFNIAARKLYVQ), 327 to 366 (PYEEELNCMGIYRGSSKLVVGTSKGKLYSYNWGYFGYHCD), and 411 to 450 (QHNMPIESLDINTSGELLASSSHNNDVRFWNVKYFEDFGD). A disordered region spans residues 483 to 503 (TKEDEDNADNNDAAAGPSNSA).

Belongs to the WD repeat WDR55 family.

This Drosophila pseudoobscura pseudoobscura (Fruit fly) protein is WD repeat-containing protein 55 homolog.